Here is a 419-residue protein sequence, read N- to C-terminus: Gamma-glutamyl phosphate reductase (419 aa).

This sequence belongs to the gamma-glutamyl phosphate reductase family.

The protein localises to the cytoplasm. It catalyses the reaction L-glutamate 5-semialdehyde + phosphate + NADP(+) = L-glutamyl 5-phosphate + NADPH + H(+). It participates in amino-acid biosynthesis; L-proline biosynthesis; L-glutamate 5-semialdehyde from L-glutamate: step 2/2. Functionally, catalyzes the NADPH-dependent reduction of L-glutamate 5-phosphate into L-glutamate 5-semialdehyde and phosphate. The product spontaneously undergoes cyclization to form 1-pyrroline-5-carboxylate. The sequence is that of Gamma-glutamyl phosphate reductase from Azobacteroides pseudotrichonymphae genomovar. CFP2.